Consider the following 452-residue polypeptide: Bifunctional F420 biosynthesis protein FbiB (452 aa).

A coenzyme F420:L-glutamate ligase region spans residues 1–248 (MVSAPGDHAG…AGEEDLFWLG (248 aa)). GTP-binding positions include 24-27 (LPEF), serine 54, and lysine 59. A divalent metal cation is bound at residue aspartate 113. Asparagine 116 is a GTP binding site. A divalent metal cation is bound by residues aspartate 154 and threonine 155. The interval 249-452 (TAEAVERGRR…RDPGDGLVER (204 aa)) is dehydro-coenzyme F420-0 reductase. Residues 264–268 (RRSVR) and alanine 292 contribute to the FMN site. Position 324 (aspartate 324) interacts with coenzyme F420-(gamma-Glu)n. Residues glycine 403 and arginine 440 each contribute to the FMN site.

It in the N-terminal section; belongs to the CofE family. The cofactor is Mg(2+). Mn(2+) is required as a cofactor. K(+) serves as cofactor.

It carries out the reaction oxidized coenzyme F420-0 + GTP + L-glutamate = oxidized coenzyme F420-1 + GDP + phosphate + H(+). The enzyme catalyses oxidized coenzyme F420-0 + FMN + H(+) = dehydro coenzyme F420-0 + FMNH2. The catalysed reaction is oxidized coenzyme F420-1 + GTP + L-glutamate = oxidized coenzyme F420-2 + GDP + phosphate + H(+). Its pathway is cofactor biosynthesis; coenzyme F420 biosynthesis. Its function is as follows. Bifunctional enzyme that catalyzes the GTP-dependent successive addition of two or more gamma-linked L-glutamates to the L-lactyl phosphodiester of 7,8-didemethyl-8-hydroxy-5-deazariboflavin (F420-0) to form polyglutamated F420 derivatives, and the FMNH2-dependent reduction of dehydro-F420-0 to form F420-0. In Nocardia farcinica (strain IFM 10152), this protein is Bifunctional F420 biosynthesis protein FbiB.